We begin with the raw amino-acid sequence, 1604 residues long: Calmodulin-regulated spectrin-associated protein 1 (1604 aa).

S216 is modified (phosphoserine). Residues 235-350 (PVDFARVVRY…FIAELFWWFE (116 aa)) form the Calponin-homology (CH) domain. 3 positions are modified to phosphoserine: S390, S394, and S435. The segment at 394–413 (SPAAMSPADLPPSTQPLTEG) is disordered. The interval 444–491 (RQKQQKVSQAEEIPDQRHRSNSLTRADGQPRGAAIAWPDKKNRPVSQP) is disordered. T531 carries the post-translational modification Phosphothreonine. Phosphoserine is present on residues S571, S574, S581, S593, S607, S647, S739, S745, S755, and S757. Residues 642-671 (MAKRPSEGSQPLVRKKVTGSHGSRDLNRTF) are disordered. Residues 784–806 (EEESAKLQEDMKVKEHEDKDDAS) show a composition bias toward basic and acidic residues. Disordered stretches follow at residues 784-824 (EEES…SMSM) and 842-888 (LNSC…KDPA). Low complexity-rich tracts occupy residues 813–824 (LSTTSQLSSMSM) and 847–858 (TKSSTSSSQKTT). A compositionally biased stretch (basic and acidic residues) spans 874 to 886 (QKREQSPSRHSKD). Residues 888-909 (ASLLASELVQLHMQLEEKRRAI) form a sufficient for interaction with SPTBN1 region. 2 coiled-coil regions span residues 890–926 (LLAS…QRLK) and 1026–1058 (DVNE…QEQL). The interval 920-939 (SARQRLKLGKAAFLHVVKKG) is sufficient for interaction with calmodulin. 3 disordered regions span residues 1085–1163 (FVEP…GELP), 1246–1271 (PDED…KPGV), and 1298–1448 (RKAE…DRDW). A Phosphoserine modification is found at S1090. Basic and acidic residues predominate over residues 1113–1124 (RPAELKVPKDRQ). Polar residues predominate over residues 1125 to 1137 (QGCSRSKTPTPSV). S1154 carries the phosphoserine modification. 2 stretches are compositionally biased toward basic and acidic residues: residues 1246–1258 (PDED…HESS) and 1298–1348 (RKAE…EYLR). Residues 1286–1357 (AKKRAAFLLK…RRKQQQALEE (72 aa)) are a coiled coil. Over residues 1363–1374 (PKSKPKKPRPKS) the composition is skewed to basic residues. Residues 1382–1394 (SDSGTKCSSTPDN) show a composition bias toward polar residues. A compositionally biased stretch (low complexity) spans 1395–1412 (LSQTHSGSSLSLASAATT). 2 positions are modified to phosphoserine: S1400 and S1429. The region spanning 1465 to 1599 (GPKLFKEPSS…QPKRPTVPKK (135 aa)) is the CKK domain. Y1539 is subject to Phosphotyrosine.

This sequence belongs to the CAMSAP1 family. As to quaternary structure, interacts with spectrin via SPTBN1; the interaction is direct. Interacts with calmodulin; calcium-dependent it prevents interaction with spectrin. In brain, specifically expressed in astrocytes (at protein level).

It localises to the cytoplasm. The protein resides in the cytoskeleton. Functionally, key microtubule-organizing protein that specifically binds the minus-end of non-centrosomal microtubules and regulates their dynamics and organization. Specifically recognizes growing microtubule minus-ends and stabilizes microtubules. Acts on free microtubule minus-ends that are not capped by microtubule-nucleating proteins or other factors and protects microtubule minus-ends from depolymerization. In contrast to CAMSAP2 and CAMSAP3, tracks along the growing tips of minus-end microtubules without significantly affecting the polymerization rate: binds at the very tip of the microtubules minus-end and acts as a minus-end tracking protein (-TIP) that dissociates from microtubules after allowing tubulin incorporation. Through interaction with spectrin may regulate neurite outgrowth. This chain is Calmodulin-regulated spectrin-associated protein 1 (Camsap1), found in Rattus norvegicus (Rat).